A 107-amino-acid chain; its full sequence is Thioredoxin (107 aa).

The region spanning 2-107 (SVSQVTDASF…LESTLNKYIS (106 aa)) is the Thioredoxin domain. Catalysis depends on nucleophile residues Cys-31 and Cys-34. The cysteines at positions 31 and 34 are disulfide-linked.

It belongs to the thioredoxin family.

It localises to the plastid. The protein resides in the chloroplast. Functionally, participates in various redox reactions through the reversible oxidation of its active center dithiol to a disulfide and catalyzes dithiol-disulfide exchange reactions. This Porphyra purpurea (Red seaweed) protein is Thioredoxin (trxA).